The primary structure comprises 231 residues: Two-component response regulator ARR3 (231 aa).

The Response regulatory domain occupies 34-161 (HVLAVDDSLV…DVKRLRSYLT (128 aa)). D94 is modified (4-aspartylphosphate). A disordered region spans residues 170 to 231 (GNKRKLTTPP…DSPMRSPGLA (62 aa)). Residues 185–199 (SATSSMESSDSTVES) are compositionally biased toward low complexity. Over residues 210 to 221 (LTMSPESATSLV) the composition is skewed to polar residues.

The protein belongs to the ARR family. Type-A subfamily. Post-translationally, two-component system major event consists of a His-to-Asp phosphorelay between a sensor histidine kinase (HK) and a response regulator (RR). In plants, the His-to-Asp phosphorelay involves an additional intermediate named Histidine-containing phosphotransfer protein (HPt). This multistep phosphorelay consists of a His-Asp-His-Asp sequential transfer of a phosphate group between first a His and an Asp of the HK protein, followed by the transfer to a conserved His of the HPt protein and finally the transfer to an Asp in the receiver domain of the RR protein. In terms of tissue distribution, predominantly expressed in roots.

The protein resides in the nucleus. In terms of biological role, functions as a response regulator involved in His-to-Asp phosphorelay signal transduction system. Phosphorylation of the Asp residue in the receiver domain activates the ability of the protein to promote the transcription of target genes. Type-A response regulators seem to act as negative regulators of the cytokinin signaling. This is Two-component response regulator ARR3 (ARR3) from Arabidopsis thaliana (Mouse-ear cress).